The following is a 1265-amino-acid chain: Cohesin subunit SA-1 (1265 aa).

The span at 1–16 (MITSELSVLQDSTNES) shows a compositional bias: polar residues. 2 disordered regions span residues 1-21 (MITSELSVLQDSTNESAVMHT) and 37-91 (DLEV…EGDP). The segment covering 62-73 (TPGDRSRAEPGS) has biased composition (basic and acidic residues). In terms of domain architecture, SCD spans 303-388 (FVHRYRDAIA…NRFKDRIVSM (86 aa)). 2 disordered regions span residues 1063-1097 (GDEDRLSVNSGGSNSKGSSVRSKKGRPPLHKKRVI) and 1111-1130 (DTIQTPGALTTPQLTSTVLR). Residues 1069–1082 (SVNSGGSNSKGSSV) show a composition bias toward low complexity. The segment covering 1083 to 1095 (RSKKGRPPLHKKR) has biased composition (basic residues). Residues 1111–1129 (DTIQTPGALTTPQLTSTVL) are compositionally biased toward polar residues.

Belongs to the SCC3 family. As to quaternary structure, interacts directly with RAD21 in cohesin complex. Cohesin complexes are composed of a heterodimer between and SMC3, which are attached via their hinge domain, and RAD21 which link them at their heads, and one STAG protein (STAG1 OR STAG2). In cohesin complexes, STAG1 is mutually exclusive with STAG2. Phosphorylated by PLK1. The large dissociation of cohesin from chromosome arms during prophase is partly due to its phosphorylation.

Its subcellular location is the nucleus. The protein resides in the chromosome. It is found in the centromere. In terms of biological role, component of cohesin complex, a complex required for the cohesion of sister chromatids after DNA replication. The cohesin complex apparently forms a large proteinaceous ring within which sister chromatids can be trapped. At anaphase, the complex is cleaved and dissociates from chromatin, allowing sister chromatids to segregate. The cohesin complex may also play a role in spindle pole assembly during mitosis. This Xenopus laevis (African clawed frog) protein is Cohesin subunit SA-1 (stag1).